We begin with the raw amino-acid sequence, 212 residues long: MKFFIDTANINEIREANDLGILAGVTTNPSLVAKEGVDFHERLREITSLVKGSVSAEVVALDAEGMIKEGKELAAIAPNITVKVPMTTEGLKAVHAFHQEGITTNVTLVFSAVQALLAARAGATYVSPFLGRLDDIGHDGLDLISQIAEIFHVHDLDIQIIAASIRHPQHVTEAALRGAHIATIPFKVISQLSKHPLTDKGIEQFLKDWNNR.

Residue K83 is the Schiff-base intermediate with substrate of the active site.

It belongs to the transaldolase family. Type 3B subfamily.

It is found in the cytoplasm. It catalyses the reaction D-sedoheptulose 7-phosphate + D-glyceraldehyde 3-phosphate = D-erythrose 4-phosphate + beta-D-fructose 6-phosphate. It participates in carbohydrate degradation; pentose phosphate pathway; D-glyceraldehyde 3-phosphate and beta-D-fructose 6-phosphate from D-ribose 5-phosphate and D-xylulose 5-phosphate (non-oxidative stage): step 2/3. Functionally, transaldolase is important for the balance of metabolites in the pentose-phosphate pathway. This chain is Probable transaldolase (tal), found in Halalkalibacterium halodurans (strain ATCC BAA-125 / DSM 18197 / FERM 7344 / JCM 9153 / C-125) (Bacillus halodurans).